The sequence spans 159 residues: Ribosomal RNA large subunit methyltransferase H (159 aa).

Residues L76, G108, and 127 to 132 (LSDMTF) contribute to the S-adenosyl-L-methionine site.

It belongs to the RNA methyltransferase RlmH family. In terms of assembly, homodimer.

Its subcellular location is the cytoplasm. It catalyses the reaction pseudouridine(1915) in 23S rRNA + S-adenosyl-L-methionine = N(3)-methylpseudouridine(1915) in 23S rRNA + S-adenosyl-L-homocysteine + H(+). Its function is as follows. Specifically methylates the pseudouridine at position 1915 (m3Psi1915) in 23S rRNA. The protein is Ribosomal RNA large subunit methyltransferase H of Acetivibrio thermocellus (strain ATCC 27405 / DSM 1237 / JCM 9322 / NBRC 103400 / NCIMB 10682 / NRRL B-4536 / VPI 7372) (Clostridium thermocellum).